The primary structure comprises 521 residues: GMP synthase [glutamine-hydrolyzing] (521 aa).

A Glutamine amidotransferase type-1 domain is found at 9 to 203; it reads KILILDFGSQ…VSDICQCKKN (195 aa). Residue Cys-86 is the Nucleophile of the active site. Active-site residues include His-177 and Glu-179. One can recognise a GMPS ATP-PPase domain in the interval 204-396; it reads WTTDNIITKL…LGLPTHMLNC (193 aa). 231-237 serves as a coordination point for ATP; it reads SGGVDSS.

In terms of assembly, homodimer.

It carries out the reaction XMP + L-glutamine + ATP + H2O = GMP + L-glutamate + AMP + diphosphate + 2 H(+). It functions in the pathway purine metabolism; GMP biosynthesis; GMP from XMP (L-Gln route): step 1/1. Catalyzes the synthesis of GMP from XMP. In Vesicomyosocius okutanii subsp. Calyptogena okutanii (strain HA), this protein is GMP synthase [glutamine-hydrolyzing].